The sequence spans 197 residues: Imidazoleglycerol-phosphate dehydratase (197 aa).

This sequence belongs to the imidazoleglycerol-phosphate dehydratase family.

It localises to the cytoplasm. The catalysed reaction is D-erythro-1-(imidazol-4-yl)glycerol 3-phosphate = 3-(imidazol-4-yl)-2-oxopropyl phosphate + H2O. It participates in amino-acid biosynthesis; L-histidine biosynthesis; L-histidine from 5-phospho-alpha-D-ribose 1-diphosphate: step 6/9. The chain is Imidazoleglycerol-phosphate dehydratase from Marinomonas sp. (strain MWYL1).